The following is a 160-amino-acid chain: Cytochrome b6-f complex subunit 4 (160 aa).

3 helical membrane passes run 36 to 56, 95 to 115, and 131 to 151; these read LLYV…GLAI, LLGV…PFIE, and TIFL…TMPI.

This sequence belongs to the cytochrome b family. PetD subfamily. The 4 large subunits of the cytochrome b6-f complex are cytochrome b6, subunit IV (17 kDa polypeptide, petD), cytochrome f and the Rieske protein, while the 4 small subunits are petG, petL, petM and petN. The complex functions as a dimer.

The protein resides in the plastid. It is found in the chloroplast thylakoid membrane. Its function is as follows. Component of the cytochrome b6-f complex, which mediates electron transfer between photosystem II (PSII) and photosystem I (PSI), cyclic electron flow around PSI, and state transitions. The polypeptide is Cytochrome b6-f complex subunit 4 (Porphyra purpurea (Red seaweed)).